The sequence spans 71 residues: UPF0352 protein Ssed_1809 (71 aa).

Belongs to the UPF0352 family.

The protein is UPF0352 protein Ssed_1809 of Shewanella sediminis (strain HAW-EB3).